A 253-amino-acid chain; its full sequence is Large ribosomal subunit protein uL2C (253 aa).

The protein belongs to the universal ribosomal protein uL2 family. In terms of assembly, component of the large ribosomal subunit (LSU). Mature yeast ribosomes consist of a small (40S) and a large (60S) subunit. The 40S small subunit contains 1 molecule of ribosomal RNA (18S rRNA) and at least 33 different proteins. The large 60S subunit contains 3 rRNA molecules (25S, 5.8S and 5S rRNA) and at least 46 different proteins.

The protein resides in the cytoplasm. Its subcellular location is the nucleus. In terms of biological role, component of the ribosome, a large ribonucleoprotein complex responsible for the synthesis of proteins in the cell. The small ribosomal subunit (SSU) binds messenger RNAs (mRNAs) and translates the encoded message by selecting cognate aminoacyl-transfer RNA (tRNA) molecules. The large subunit (LSU) contains the ribosomal catalytic site termed the peptidyl transferase center (PTC), which catalyzes the formation of peptide bonds, thereby polymerizing the amino acids delivered by tRNAs into a polypeptide chain. The nascent polypeptides leave the ribosome through a tunnel in the LSU and interact with protein factors that function in enzymatic processing, targeting, and the membrane insertion of nascent chains at the exit of the ribosomal tunnel. This is Large ribosomal subunit protein uL2C (rpl803) from Schizosaccharomyces pombe (strain 972 / ATCC 24843) (Fission yeast).